The sequence spans 651 residues: J domain-containing protein required for chloroplast accumulation response 1 (651 aa).

Polar residues predominate over residues M1–A17. 5 disordered regions span residues M1–S56, G114–L138, L156–D176, K250–K291, and K308–P526. S56 bears the Phosphoserine mark. The span at S126–S137 shows a compositional bias: low complexity. Basic and acidic residues-rich tracts occupy residues K250–G259, T281–K291, I337–K357, V405–D416, R441–N456, and Q488–M497. Residues D532–K562 adopt a coiled-coil conformation. The region spanning S586 to V651 is the J domain.

In terms of tissue distribution, expressed in leaves and stems, but not in roots.

Its subcellular location is the cytoplasm. Its function is as follows. Required for chloroplast photorelocation movement; chloroplast accumulation upon low blue light and for chloroplast movement to the bottom of cells in darkness, by modulating chloroplast actin (Cp-actin) filaments distribution, appearance and disappearance. May mediate a slight resistance to aluminum in root hair cells. The protein is J domain-containing protein required for chloroplast accumulation response 1 (JAC1) of Arabidopsis thaliana (Mouse-ear cress).